The following is a 226-amino-acid chain: Putative DNA repair protein recA homolog 4 (226 aa).

ATP is bound at residue 41 to 48 (GPEASGKT).

This sequence belongs to the RecA family.

It is found in the cytoplasm. Its function is as follows. Involved in recombination ability and DNA strand transfer activity. This Arabidopsis thaliana (Mouse-ear cress) protein is Putative DNA repair protein recA homolog 4.